Consider the following 1136-residue polypeptide: MAERITDEQVADLLAILRTDASVDAKANRITAVKTSIKQHNVPATCFAPLFEALHIASTAQHPVLVNAGFTTLNHLLARLARQDPKFLAKEAPHTLPVVVDKLGDQKDKFRQIAVQALTTLYKVAPVDVERSVRNIAMVGKNPRAKEMSMHWLLQTHQEQGLQFRAYVPTLMELLEDADGSVRDVAKTTVIELFKNAPNTAKSDLKRQLKNFKVRPAIEQVIVKELNNPSSSVSSHQNDMMDLDEPVMPTRAPAPASIRTNLSASVPTLASERPLTPGLDSRPEPVEPQFVNTQRELDDIFRDMHMFFDGRETEQNWLKREESMTKLRRLIAGNAVSDFHDSFLAALRALLDGIIKAVTSLRTSLSKEGCALVQDIATAYGPGMDPMVEILMQTFVKLCAATKKISSAQANATINTILGKVSYTNRLMQHIWMACQDKNVQPRLYATEWLTTMLTKMAHHKNQVEHTGGLDLIEKCIKKGLADANPGVREKMRATYWTFSGIWPARATHIMNELDLTAQKLLQKDPHNPNAHSRTETGGARPGMGLSKSVMGAPKPSVRDAIIAQKRAMASSKNQPPRPGSAMAHFSPVGTTRNVSSTSQASVASASTASAVPAPTKSAFGASSGGLSGAPMRPGKRRPEVAARPATAGPYSVRNEVPPAEPASPPSKPRIKTVTSPKTQTLVISPKKAIPRPQQGHSTNSSESGIPIPVSGISSPTKPTSAFGLRSPRSPLAPELPPSSVIASPSRVMPDPAQIPLPESSPSKDEELSLVVPGSVLPTQKTPSPTEESQQPQIAIVPIEAVEIVPDSPYRSVQVYEDPYTAGQTQPQSTYTSPVLEPKPVNEGAATSPPPQPSYDGENGHDMGEIPIPSSPERTRQNSRLLDSGISKVETKSLDVHGFRKLQGIIRDPKGGAIFTDDKFNALLSGLFEFLEAHPSEIPHVPAEKQQDVKAQILATIKLLLKKMRENFRPHVSRGLDSLLRARAAYDSRSHIVSGMELLADELITLGDPTEITLVLANTLREALLDKDQQHNTAARSLSMGMHVLKEVVESSANSSTPFTPTEQELDTLAGLAAKCLESADSAVRMDAVQLCVALHAKVGDQRFWDAVKREGVRDDPKSLITYYIVRRQREVGTNA.

HEAT repeat units follow at residues 95 to 133 (TLPV…ERSV) and 167 to 205 (YVPT…KSDL). Disordered regions lie at residues 524–554 (KDPH…MGAP), 567–794 (RAMA…QPQI), and 821–884 (TAGQ…LLDS). Low complexity predominate over residues 595-622 (VSSTSQASVASASTASAVPAPTKSAFGA). Positions 659 to 668 (PAEPASPPSK) are enriched in pro residues. Polar residues predominate over residues 673–683 (TVTSPKTQTLV). Low complexity predominate over residues 701-716 (SSESGIPIPVSGISSP). Composition is skewed to polar residues over residues 777 to 793 (LPTQ…QQPQ) and 822 to 833 (AGQTQPQSTYTS).

Belongs to the CLASP family. In terms of assembly, interacts with microtubules.

Its subcellular location is the nucleus. The protein localises to the cytoplasm. It localises to the cytoskeleton. It is found in the spindle. In terms of biological role, microtubule binding protein that promotes the stabilization of dynamic microtubules. Required for mitotic spindle formation. This is Protein stu-1 (stu-1) from Neurospora crassa (strain ATCC 24698 / 74-OR23-1A / CBS 708.71 / DSM 1257 / FGSC 987).